The following is a 461-amino-acid chain: Armadillo repeat-containing X-linked protein 1 (461 aa).

Residues 1–6 are Mitochondrial intermembrane-facing; it reads MGRTRE. 2 mitochondrion outer membrane (MOM)-targeting sequence regions span residues 1–6 and 26–36; these read MGRTRE and RLTWGKDENEK. Residues 7–29 traverse the membrane as a helical; Signal-anchor segment; the sequence is AGCVAAGMVIGAGACYCVYRLTW. Residues 30-461 are Cytoplasmic-facing; that stretch reads GKDENEKLWD…VKVLKVLTKL (432 aa). Disordered regions lie at residues 34–110 and 148–192; these read NEKL…HSEG and SSLP…PATA. The segment covering 38-51 has biased composition (acidic residues); that stretch reads WDDEDEEEEEEEES. Basic and acidic residues predominate over residues 96–110; the sequence is PDVKKEVYPESHSEG. Residues 167–185 are compositionally biased toward basic residues; the sequence is SRARNRTSGKVKRKNRSKS. ARM repeat units follow at residues 203–243, 245–284, 366–406, and 423–461; these read PYKI…NNAA, SFNQNAIRELGGVPIIAKLIKTRDPIIREKTYNALNNLSV, PAMT…NIND, and SSLFFLFKESGVCVKKIKALASHKDLVVKVKVLKVLTKL.

This sequence belongs to the eutherian X-chromosome-specific Armcx family. In terms of assembly, interacts with MIRO1.

Its subcellular location is the mitochondrion. The protein localises to the mitochondrion outer membrane. Functionally, regulates mitochondrial transport during axon regeneration. Increases the proportion of motile mitochondria by recruiting stationary mitochondria into the motile pool. Enhances mitochondria movement and neurite growth in both adult axons and embryonic neurons. Promotes neuronal survival and axon regeneration after nerve injury. May link mitochondria to the Trak1-kinesin motor complex via its interaction with MIRO1. The protein is Armadillo repeat-containing X-linked protein 1 (Armcx1) of Rattus norvegicus (Rat).